The chain runs to 307 residues: Methionyl-tRNA formyltransferase (307 aa).

108 to 111 (SLLP) contributes to the (6S)-5,6,7,8-tetrahydrofolate binding site.

This sequence belongs to the Fmt family.

It carries out the reaction L-methionyl-tRNA(fMet) + (6R)-10-formyltetrahydrofolate = N-formyl-L-methionyl-tRNA(fMet) + (6S)-5,6,7,8-tetrahydrofolate + H(+). In terms of biological role, attaches a formyl group to the free amino group of methionyl-tRNA(fMet). The formyl group appears to play a dual role in the initiator identity of N-formylmethionyl-tRNA by promoting its recognition by IF2 and preventing the misappropriation of this tRNA by the elongation apparatus. The polypeptide is Methionyl-tRNA formyltransferase (Xanthomonas axonopodis pv. citri (strain 306)).